The following is a 154-amino-acid chain: MVLSDGEWQLVLNIWAKVEADVAGHGQDVLIRLFKGHPETLEKFDKFKHLKTEAEMKASEDLKKHGNTVLTALGGILKKKGHHEAELKPLAQSHATKHKIPIKYLEFISDAIIHVLHSRHPGDFGADAQGAMNKALELFRKDIAAKYKELGFQG.

The Globin domain maps to 2–148; it reads VLSDGEWQLV…FRKDIAAKYK (147 aa). Ser-4 carries the post-translational modification Phosphoserine. His-65 is a nitrite binding site. An O2-binding site is contributed by His-65. Thr-68 bears the Phosphothreonine mark. His-94 contributes to the heme b binding site.

Belongs to the globin family. In terms of assembly, monomeric.

The protein resides in the cytoplasm. Its subcellular location is the sarcoplasm. The enzyme catalyses Fe(III)-heme b-[protein] + nitric oxide + H2O = Fe(II)-heme b-[protein] + nitrite + 2 H(+). The catalysed reaction is H2O2 + AH2 = A + 2 H2O. Its function is as follows. Monomeric heme protein which primary function is to store oxygen and facilitate its diffusion within muscle tissues. Reversibly binds oxygen through a pentacoordinated heme iron and enables its timely and efficient release as needed during periods of heightened demand. Depending on the oxidative conditions of tissues and cells, and in addition to its ability to bind oxygen, it also has a nitrite reductase activity whereby it regulates the production of bioactive nitric oxide. Under stress conditions, like hypoxia and anoxia, it also protects cells against reactive oxygen species thanks to its pseudoperoxidase activity. This chain is Myoglobin, found in Balaena mysticetus (Bowhead whale).